The chain runs to 353 residues: MGKVAVGLSGGVDSSVTAGILHRQGYTVEGVTLWLMKGKGQCCSEGMVDAADICEQLGIPHHIVDSRDLFQKYIVDYVVSGYEVGVTPLPCSQCNRMVKFGPMLQWAKAELGIDQIATGHYARIRYNDQTGRYELLRAVDRHKDQSYFLYDLTQEMLAGTLFPLGEMTKGETRQIAAEMQLSTAKKPESQDLCLIEAHGSMKTFLDKYIEQREGEIVDLDGKVLGHHTGIHHYTIGQRKGLGIAAPEPLYVVKLDNVMNRVVVSTRDRAGQSECTVQRMNWLALPGITSPIRAEVQVRYRSGAVPVTVIPLEGDRLKLVFEEPQFGITPGQAAVLYDGDRVLGGGIIEHPEAA.

Residues 7–14 (GLSGGVDS) and leucine 33 each bind ATP. Catalysis depends on cysteine 94, which acts as the Nucleophile. Cysteine 94 and cysteine 193 are oxidised to a cystine. Residue glycine 119 participates in ATP binding. The interval 143 to 145 (KDQ) is interaction with tRNA. Cysteine 193 acts as the Cysteine persulfide intermediate in catalysis. Residues 298–299 (RY) are interaction with tRNA.

This sequence belongs to the MnmA/TRMU family.

The protein localises to the cytoplasm. The enzyme catalyses S-sulfanyl-L-cysteinyl-[protein] + uridine(34) in tRNA + AH2 + ATP = 2-thiouridine(34) in tRNA + L-cysteinyl-[protein] + A + AMP + diphosphate + H(+). Catalyzes the 2-thiolation of uridine at the wobble position (U34) of tRNA, leading to the formation of s(2)U34. This Picosynechococcus sp. (strain ATCC 27264 / PCC 7002 / PR-6) (Agmenellum quadruplicatum) protein is tRNA-specific 2-thiouridylase MnmA.